A 171-amino-acid chain; its full sequence is Lipoprotein signal peptidase (171 aa).

Transmembrane regions (helical) follow at residues 8 to 28, 64 to 84, and 99 to 119; these read SFLW…YIVV, WQQY…VYFL, and ALII…GFVV. Residues D120 and D138 contribute to the active site. The chain crosses the membrane as a helical span at residues 133–153; the sequence is VFNIADIAICIGAGLLALDAF.

The protein belongs to the peptidase A8 family.

The protein resides in the cell inner membrane. It catalyses the reaction Release of signal peptides from bacterial membrane prolipoproteins. Hydrolyzes -Xaa-Yaa-Zaa-|-(S,diacylglyceryl)Cys-, in which Xaa is hydrophobic (preferably Leu), and Yaa (Ala or Ser) and Zaa (Gly or Ala) have small, neutral side chains.. The protein operates within protein modification; lipoprotein biosynthesis (signal peptide cleavage). Functionally, this protein specifically catalyzes the removal of signal peptides from prolipoproteins. In Haemophilus influenzae (strain PittGG), this protein is Lipoprotein signal peptidase.